Reading from the N-terminus, the 278-residue chain is Glutamate racemase (278 aa).

Substrate-binding positions include 13–14 and 45–46; these read DS and YG. Residue cysteine 76 is the Proton donor/acceptor of the active site. 77–78 is a binding site for substrate; the sequence is NT. Cysteine 185 functions as the Proton donor/acceptor in the catalytic mechanism. 186 to 187 is a substrate binding site; it reads TH.

This sequence belongs to the aspartate/glutamate racemases family.

The enzyme catalyses L-glutamate = D-glutamate. It functions in the pathway cell wall biogenesis; peptidoglycan biosynthesis. In terms of biological role, provides the (R)-glutamate required for cell wall biosynthesis. The chain is Glutamate racemase from Gloeothece citriformis (strain PCC 7424) (Cyanothece sp. (strain PCC 7424)).